The primary structure comprises 260 residues: Deoxyribonuclease-1 (260 aa).

N-linked (GlcNAc...) asparagine glycosylation is present at Asn18. Glu78 is an active-site residue. A disulfide bond links Cys101 and Cys104. Residue His134 is part of the active site. A disulfide bond links Cys173 and Cys209.

Belongs to the DNase I family. The cofactor is Ca(2+). It depends on Mg(2+) as a cofactor.

The protein localises to the secreted. The protein resides in the zymogen granule. It localises to the nucleus envelope. The enzyme catalyses Endonucleolytic cleavage to 5'-phosphodinucleotide and 5'-phosphooligonucleotide end-products.. In terms of biological role, serum endocuclease secreted into body fluids by a wide variety of exocrine and endocrine organs. Expressed by non-hematopoietic tissues and preferentially cleaves protein-free DNA. Among other functions, seems to be involved in cell death by apoptosis. Binds specifically to G-actin and blocks actin polymerization. Together with DNASE1L3, plays a key role in degrading neutrophil extracellular traps (NETs). NETs are mainly composed of DNA fibers and are released by neutrophils to bind pathogens during inflammation. Degradation of intravascular NETs by DNASE1 and DNASE1L3 is required to prevent formation of clots that obstruct blood vessels and cause organ damage following inflammation. In Ovis aries (Sheep), this protein is Deoxyribonuclease-1 (DNASE1).